The chain runs to 506 residues: MANETVIQMIDVTKRFGDFVANDKVNLELKKGEIHALLGENGAGKSTLMNILSGLLEPSEGEVHVKGKLENIDSPSKAANLGIGMVHQHFMLVDAFTVTENIILGNEVTKGINLDLKTAKKKILELSERYGLSVEPDALIRDISVGQQQRVEILKTLYRGADILIFDEPTAVLTPAEITELMQIMKNLIKEGKSIILITHKLDEIRAVADRITVIRRGKSIDTVELGDKTNQELAELMVGRSVSFITEKAAAQPKDVVLEIKDLNIKESRGSLKVKGLSLDVRAGEIVGVAGIDGNGQTELVKAITGLTKVDSGSIKLHNKDITNQRPRKITEQSVGHVPEDRHRDGLVLEMTVAENIALQTYYKPPMSKYGFLDYNKINSHARELMEEFDVRGAGEWVSASSLSGGNQQKAIIAREIDRNPDLLIVSQPTRGLDVGAIEYIHKRLIQARDEGKAVLVISFELDEILNVSDRIAVIHDGQIQGIVSPETTTKQELGILMVGGNINE.

ABC transporter domains lie at 7-242 (IQMI…VGRS) and 259-503 (LEIK…VGGN). 39–46 (GENGAGKS) is a binding site for ATP.

It belongs to the ABC transporter superfamily. In terms of assembly, the complex is composed of two ATP-binding proteins (NupA), two transmembrane proteins (NupB and NupC) and a solute-binding protein (BmpA).

The protein localises to the cell membrane. Functionally, part of an ABC transporter complex involved in the uptake of all common nucleosides. Responsible for energy coupling to the transport system. The protein is Nucleoside import ATP-binding protein NupA of Lactococcus lactis subsp. cremoris (strain MG1363).